Reading from the N-terminus, the 312-residue chain is L-lactate dehydrogenase (312 aa).

NAD(+)-binding positions include valine 11, aspartate 32, arginine 37, and 76–77 (GA). Substrate is bound by residues glutamine 79, arginine 85, and 117–120 (NPVD). Residues 115–117 (VSN) and threonine 140 contribute to the NAD(+) site. A substrate-binding site is contributed by 145 to 148 (DTAR). Beta-D-fructose 1,6-bisphosphate-binding residues include arginine 150 and histidine 165. Catalysis depends on histidine 172, which acts as the Proton acceptor. A Phosphotyrosine modification is found at tyrosine 217. A substrate-binding site is contributed by threonine 226.

It belongs to the LDH/MDH superfamily. LDH family. In terms of assembly, homotetramer.

Its subcellular location is the cytoplasm. It carries out the reaction (S)-lactate + NAD(+) = pyruvate + NADH + H(+). The protein operates within fermentation; pyruvate fermentation to lactate; (S)-lactate from pyruvate: step 1/1. Allosterically activated by fructose 1,6-bisphosphate (FBP). Its function is as follows. Catalyzes the conversion of lactate to pyruvate. The chain is L-lactate dehydrogenase from Pseudothermotoga lettingae (strain ATCC BAA-301 / DSM 14385 / NBRC 107922 / TMO) (Thermotoga lettingae).